The sequence spans 338 residues: Probable G-protein coupled receptor 160 (338 aa).

Residues 1 to 23 (MTALSSENCSFQYQLRQTNQPLD) lie on the Extracellular side of the membrane. N8 carries N-linked (GlcNAc...) asparagine glycosylation. The chain crosses the membrane as a helical span at residues 24–44 (VNYLLFLIILGKILLNILTLG). Residues 45-58 (MRRKNTCQNFMEYF) lie on the Cytoplasmic side of the membrane. Residues 59 to 79 (CISLAFVDLLLLVNISIILYF) traverse the membrane as a helical segment. The Extracellular segment spans residues 80–93 (RDFVLLSIRFTKYH). Residues 94–114 (ICLFTQIISFTYGFLHYPVFL) traverse the membrane as a helical segment. Residues 115–136 (TACIDYCLNFSKTTKLSFKCQK) lie on the Cytoplasmic side of the membrane. Residues 137-157 (LFYFFTVILIWISVLAYVLGD) form a helical membrane-spanning segment. Residues 158-177 (PAIYQSLKAQNAYSRHCPFY) lie on the Extracellular side of the membrane. Residues 178–198 (VSIQSYWLSFFMVMILFVAFI) traverse the membrane as a helical segment. Residues 199–244 (TCWEEVTTLVQAIRITSYMNETILYFPFSSHSSYTVRSKKIFLSKL) are Cytoplasmic-facing. Residues 245 to 265 (IVCFLSTWLPFVLLQVIIVLL) form a helical membrane-spanning segment. The Extracellular portion of the chain corresponds to 266–268 (KVQ). A helical membrane pass occupies residues 269 to 289 (IPAYIEMNIPWLYFVNSFLIA). The Cytoplasmic portion of the chain corresponds to 290 to 338 (TVYWFNCHKLNLKDIGLPLDPFVNWKCCFIPLTIPNLEQIEKPISIMIC).

Belongs to the G-protein coupled receptor 1 family.

The protein localises to the cell membrane. Its function is as follows. Orphan receptor. This is Probable G-protein coupled receptor 160 (GPR160) from Homo sapiens (Human).